A 296-amino-acid polypeptide reads, in one-letter code: Diguanylate cyclase DgcS (296 aa).

In terms of domain architecture, GGDEF spans 165–293 (GSVSLIVLDL…GRNCYKLSPT (129 aa)). 3 residues coordinate Mg(2+): Asp-173, Leu-174, and Asp-216. Asp-216 is an active-site residue.

Mg(2+) is required as a cofactor.

It catalyses the reaction 2 GTP = 3',3'-c-di-GMP + 2 diphosphate. Catalyzes the synthesis of cyclic-di-GMP (c-di-GMP) via the condensation of 2 GTP molecules. May be involved in the regulation of formation of solid surface-associated biofilms and pellicles according to environmental conditions. This chain is Diguanylate cyclase DgcS, found in Shewanella oneidensis (strain ATCC 700550 / JCM 31522 / CIP 106686 / LMG 19005 / NCIMB 14063 / MR-1).